A 506-amino-acid chain; its full sequence is RNA-splicing ligase RtcB homolog (506 aa).

Mn(2+) is bound by residues Asp-120, Cys-123, His-228, His-260, and His-354. 227–231 serves as a coordination point for GMP; it reads NHYAE. Residues 354–355, 403–406, Ser-410, 429–432, and Lys-505 contribute to the GMP site; these read HN, GGSM, and HGAG. Catalysis depends on His-429, which acts as the GMP-histidine intermediate.

It belongs to the RtcB family. Catalytic component of the tRNA-splicing ligase complex. Mn(2+) is required as a cofactor.

The enzyme catalyses a 3'-end 3'-phospho-ribonucleotide-RNA + a 5'-end dephospho-ribonucleoside-RNA + GTP = a ribonucleotidyl-ribonucleotide-RNA + GMP + diphosphate. The catalysed reaction is a 3'-end 2',3'-cyclophospho-ribonucleotide-RNA + a 5'-end dephospho-ribonucleoside-RNA + GTP + H2O = a ribonucleotidyl-ribonucleotide-RNA + GMP + diphosphate + H(+). Catalytic subunit of the tRNA-splicing ligase complex that acts by directly joining spliced tRNA halves to mature-sized tRNAs by incorporating the precursor-derived splice junction phosphate into the mature tRNA as a canonical 3',5'-phosphodiester. May act as an RNA ligase with broad substrate specificity, and may function toward other RNAs. This is RNA-splicing ligase RtcB homolog from Aedes aegypti (Yellowfever mosquito).